The sequence spans 533 residues: WD repeat-containing protein JIP5 (533 aa).

5 WD repeats span residues 26 to 67, 84 to 130, 176 to 215, 264 to 309, and 372 to 409; these read NYSD…EKQS, GKVS…GSCR, NSND…GSKL, NQDD…FMDQ, and GAAD…EIAL. Acidic residues-rich tracts occupy residues 408-428 and 437-452; these read ALDE…EDDL and ASDE…EDEK. The segment at 408–533 is disordered; that stretch reads ALDESDDSDD…EHGIRRFDDL (126 aa). Composition is skewed to basic and acidic residues over residues 453 to 463 and 521 to 533; these read EDKPVKIDHPL and QKHE…FDDL.

Belongs to the WD repeat WDR55 family.

The protein resides in the nucleus. It localises to the nucleolus. The protein is WD repeat-containing protein JIP5 (JIP5) of Scheffersomyces stipitis (strain ATCC 58785 / CBS 6054 / NBRC 10063 / NRRL Y-11545) (Yeast).